Consider the following 236-residue polypeptide: DNA repair protein RecO (236 aa).

Belongs to the RecO family.

Functionally, involved in DNA repair and RecF pathway recombination. This is DNA repair protein RecO from Haemophilus influenzae (strain PittGG).